Consider the following 372-residue polypeptide: Glutamate 5-kinase (372 aa).

Position 14 (Lys14) interacts with ATP. Substrate is bound by residues Ser54, Asp141, and Asn153. Residue 173-174 participates in ATP binding; the sequence is TD. Residues 280 to 358 enclose the PUA domain; the sequence is RGHVVIDAGA…GEIETVLGYM (79 aa).

The protein belongs to the glutamate 5-kinase family.

It localises to the cytoplasm. The enzyme catalyses L-glutamate + ATP = L-glutamyl 5-phosphate + ADP. It functions in the pathway amino-acid biosynthesis; L-proline biosynthesis; L-glutamate 5-semialdehyde from L-glutamate: step 1/2. Its function is as follows. Catalyzes the transfer of a phosphate group to glutamate to form L-glutamate 5-phosphate. The chain is Glutamate 5-kinase from Burkholderia mallei (strain NCTC 10229).